Here is a 306-residue protein sequence, read N- to C-terminus: Follistatin-related protein 1 (306 aa).

A signal peptide spans 1–18 (MWKRWLALALVAVAWVRA). The Follistatin-like domain occupies 28 to 51 (ICANVFCGAGRECAVTEKGEPTCL). 5 cysteine pairs are disulfide-bonded: cysteine 29–cysteine 40, cysteine 34–cysteine 50, cysteine 52–cysteine 82, cysteine 56–cysteine 75, and cysteine 64–cysteine 96. A Kazal-like domain is found at 46–98 (GEPTCLCIEQCKPHKRPVCGSNGKTYLNHCELHRDACLTGSKIQVDYDGHCKE). The N-linked (GlcNAc...) asparagine glycan is linked to asparagine 142. An EF-hand 1 domain is found at 142–176 (NYSEILDKYFKNFDNGDSRLDSSEFLKFVEQNETA). At serine 163 the chain carries Phosphoserine. 2 N-linked (GlcNAc...) asparagine glycosylation sites follow: asparagine 173 and asparagine 178. In terms of domain architecture, EF-hand 2 spans 191-226 (LRGLCVDALIELSDENADWKLSFQEFLKCLNPSFNP). The 55-residue stretch at 231-285 (CALEDETYADGAETEVDCNRCVCACGNWVCTAMTCDGKNQKGAQTQTEEEMTRYV) folds into the VWFC domain.

As to quaternary structure, homodimer. Interacts with SCN10A. Interacts with DIP2A; DIP2A may act as a cell surface receptor for FSTL1. Interacts with BMP4. Interacts with CD14; this interaction promotes TL4-mediated signaling cascade.

The protein localises to the secreted. Its function is as follows. Secreted glycoprotein that is involved in various physiological processes, such as angiogenesis, regulation of the immune response, cell proliferation and differentiation. Plays a role in the development of the central nervous system, skeletal system, lungs, and ureter. Promotes endothelial cell survival, migration and differentiation into network structures in an AKT-dependent manner. Also promotes survival of cardiac myocytes. Initiates various signaling cascades by activating different receptors on the cell surface such as DIP2A, TLR4 or BMP receptors. This chain is Follistatin-related protein 1 (FSTL1), found in Pongo abelii (Sumatran orangutan).